We begin with the raw amino-acid sequence, 130 residues long: Large-conductance mechanosensitive channel (130 aa).

2 helical membrane-spanning segments follow: residues 11–31 (FALK…AAFG) and 70–90 (GAFI…FIFV).

This sequence belongs to the MscL family. In terms of assembly, homopentamer.

The protein localises to the cell membrane. In terms of biological role, channel that opens in response to stretch forces in the membrane lipid bilayer. May participate in the regulation of osmotic pressure changes within the cell. The chain is Large-conductance mechanosensitive channel from Listeria welshimeri serovar 6b (strain ATCC 35897 / DSM 20650 / CCUG 15529 / CIP 8149 / NCTC 11857 / SLCC 5334 / V8).